We begin with the raw amino-acid sequence, 221 residues long: MLDYVPWIGNGYRYGNNHRGSNSSTSGVTTQGQSQNASSNEPAPTFSNVGVGLKANVNGTLSGSRTTPNQQGTPWLTLDQANLQLWTGAGWRNDKNGQSDENYTNFASAKGSTNQQGSTTGGSAGNPDSLKQDKADKSGDSVTVAEATSGDNLTNYTNLPPTSPPHPTDRTRCHSPTRTTPSGCSCSCAACWAASRCWSIRVGKMITVSLIPPTKNGLTPN.

Residues 13-36 are compositionally biased toward low complexity; the sequence is RYGNNHRGSNSSTSGVTTQGQSQN. 2 disordered regions span residues 13-51 and 90-183; these read RYGNNHRGSNSSTSGVTTQGQSQNASSNEPAPTFSNVGV and GWRN…TPSG. Positions 37–48 are enriched in polar residues; that stretch reads ASSNEPAPTFSN. A compositionally biased stretch (basic and acidic residues) spans 130 to 139; that stretch reads LKQDKADKSG. Composition is skewed to polar residues over residues 149-160 and 174-183; these read SGDNLTNYTNLP and HSPTRTTPSG.

Belongs to the adhesin P1 family.

In Mycoplasma pneumoniae (strain ATCC 29342 / M129 / Subtype 1) (Mycoplasmoides pneumoniae), this protein is Putative adhesin P1-like protein MPN_131.